The following is a 423-amino-acid chain: SH2 domain-containing protein 5 (423 aa).

The PID domain maps to 28–146; the sequence is AQYVGSFPVD…LLCRSFQLAY (119 aa). Residues 296-392 form the SH2 domain; the sequence is WAFAGISRPC…LDMGRLNPTY (97 aa). Residues 392-423 are disordered; that stretch reads YEEQDCGPPGRPPRTLRPLSHAKSEAELQGLG.

In terms of assembly, interacts with BCR.

The protein resides in the postsynaptic density. Functionally, may be involved in synaptic plasticity regulation through the control of Rac-GTP levels. This is SH2 domain-containing protein 5 from Homo sapiens (Human).